The following is a 136-amino-acid chain: Polyadenylate-binding protein-interacting protein 2B (136 aa).

Residues 15 to 25 (NGSSVASTSPS) show a composition bias toward polar residues. Disordered regions lie at residues 15–40 (NGSS…HEEK) and 107–136 (SVGD…GVKY). Positions 27 to 40 (KCKEDQGLNGHEEK) are enriched in basic and acidic residues.

This sequence belongs to the PAIP2 family. As to quaternary structure, interacts (via central acidic portion and C-terminus) with PABPC1 (via the second and third RRM domains and the C-terminus). Post-translationally, ubiquitinated in vitro. Expressed at very high levels in pancreas, at high levels in testis and at moderately high levels in brain, heart and lung (at protein level).

Functionally, inhibits translation of capped and polyadenylated mRNAs by displacing PABPC1 from the poly(A) tail. This Mus musculus (Mouse) protein is Polyadenylate-binding protein-interacting protein 2B (Paip2b).